The following is a 114-amino-acid chain: Iron-sulfur cluster insertion protein ErpA (114 aa).

Iron-sulfur cluster is bound by residues Cys-42, Cys-106, and Cys-108.

It belongs to the HesB/IscA family. As to quaternary structure, homodimer. The cofactor is iron-sulfur cluster.

Its function is as follows. Required for insertion of 4Fe-4S clusters for at least IspG. The protein is Iron-sulfur cluster insertion protein ErpA of Haemophilus influenzae (strain PittGG).